The chain runs to 294 residues: NAD kinase (294 aa).

Aspartate 74 functions as the Proton acceptor in the catalytic mechanism. Residues aspartate 74–glycine 75, asparagine 148–glutamate 149, histidine 159, arginine 176, aspartate 178, threonine 189–serine 194, and glutamine 249 each bind NAD(+).

It belongs to the NAD kinase family. A divalent metal cation serves as cofactor.

It localises to the cytoplasm. It carries out the reaction NAD(+) + ATP = ADP + NADP(+) + H(+). In terms of biological role, involved in the regulation of the intracellular balance of NAD and NADP, and is a key enzyme in the biosynthesis of NADP. Catalyzes specifically the phosphorylation on 2'-hydroxyl of the adenosine moiety of NAD to yield NADP. The sequence is that of NAD kinase from Vibrio atlanticus (strain LGP32) (Vibrio splendidus (strain Mel32)).